The chain runs to 66 residues: uncharacterized protein (66 aa).

This sequence to E.coli YfhJ.

This is an uncharacterized protein from Pseudomonas aeruginosa (strain ATCC 15692 / DSM 22644 / CIP 104116 / JCM 14847 / LMG 12228 / 1C / PRS 101 / PAO1).